The chain runs to 273 residues: Glutamate racemase (273 aa).

Residues Asp-9–Ser-10 and Tyr-41–Gly-42 contribute to the substrate site. The active-site Proton donor/acceptor is the Cys-73. Asn-74–Thr-75 is a binding site for substrate. Residue Cys-183 is the Proton donor/acceptor of the active site. Substrate is bound at residue Thr-184–His-185.

Belongs to the aspartate/glutamate racemases family.

It carries out the reaction L-glutamate = D-glutamate. It participates in cell wall biogenesis; peptidoglycan biosynthesis. In terms of biological role, provides the (R)-glutamate required for cell wall biosynthesis. This chain is Glutamate racemase, found in Shewanella oneidensis (strain ATCC 700550 / JCM 31522 / CIP 106686 / LMG 19005 / NCIMB 14063 / MR-1).